The sequence spans 1181 residues: Putative type II restriction enzyme and methyltransferase RM.MjaORFECS2P (1181 aa).

It in the C-terminal section; belongs to the N(4)/N(6)-methyltransferase family.

It carries out the reaction Endonucleolytic cleavage of DNA to give specific double-stranded fragments with terminal 5'-phosphates.. The catalysed reaction is a 2'-deoxyadenosine in DNA + S-adenosyl-L-methionine = an N(6)-methyl-2'-deoxyadenosine in DNA + S-adenosyl-L-homocysteine + H(+). Probably a G subtype restriction enzyme that recognizes an undetermined sequence and cleaves at an undetermined site. Probably also acts as an alpha subtype methylase, presumably on the same sequence. The polypeptide is Putative type II restriction enzyme and methyltransferase RM.MjaORFECS2P (Methanocaldococcus jannaschii (strain ATCC 43067 / DSM 2661 / JAL-1 / JCM 10045 / NBRC 100440) (Methanococcus jannaschii)).